Consider the following 141-residue polypeptide: MLMPKRTKFRKQMKGRNRGYATRGASLATGEFALKAVEAGRVNSRQIEAARQALTRHVKRQAKIWIRVFPDKPLTKKPLQTRMGKGKAGVEEWVMNIKPGRIIFEMAGVDEELAREALTLALHKLPFKSKFVTRESENEIY.

Belongs to the universal ribosomal protein uL16 family. Part of the 50S ribosomal subunit.

In terms of biological role, binds 23S rRNA and is also seen to make contacts with the A and possibly P site tRNAs. The polypeptide is Large ribosomal subunit protein uL16 (Campylobacter concisus (strain 13826)).